Reading from the N-terminus, the 134-residue chain is MSWQAYVDDHLMCDIEGHEDHRLTAAAIVGHDGSVWAQSATFPQFKPEEMNGIMTDFNEPGHLAPTGLHLGGTKYMVIQGEAGAVIRGKKGSGGITIKKTGQALVFGIYKEPVTPGQCNMVVERLGDYLLEQGL.

C13 and C118 are joined by a disulfide. Residues A84–T100 carry the Involved in PIP2 interaction motif. T114 carries the post-translational modification Phosphothreonine.

This sequence belongs to the profilin family. As to quaternary structure, occurs in many kinds of cells as a complex with monomeric actin in a 1:1 ratio. Phosphorylated by MAP kinases.

It is found in the cytoplasm. The protein resides in the cytoskeleton. Its function is as follows. Binds to actin and affects the structure of the cytoskeleton. At high concentrations, profilin prevents the polymerization of actin, whereas it enhances it at low concentrations. This Olea europaea (Common olive) protein is Profilin-4.